The primary structure comprises 379 residues: Acetylornithine aminotransferase (379 aa).

Pyridoxal 5'-phosphate contacts are provided by residues 93 to 94 (GA) and F120. R123 serves as a coordination point for N(2)-acetyl-L-ornithine. Residue 205–208 (DEVQ) coordinates pyridoxal 5'-phosphate. K234 bears the N6-(pyridoxal phosphate)lysine mark. S262 provides a ligand contact to N(2)-acetyl-L-ornithine. Residue T263 coordinates pyridoxal 5'-phosphate.

Belongs to the class-III pyridoxal-phosphate-dependent aminotransferase family. ArgD subfamily. Homodimer. Requires pyridoxal 5'-phosphate as cofactor.

It is found in the cytoplasm. The enzyme catalyses N(2)-acetyl-L-ornithine + 2-oxoglutarate = N-acetyl-L-glutamate 5-semialdehyde + L-glutamate. It functions in the pathway amino-acid biosynthesis; L-arginine biosynthesis; N(2)-acetyl-L-ornithine from L-glutamate: step 4/4. This chain is Acetylornithine aminotransferase, found in Streptococcus mutans serotype c (strain ATCC 700610 / UA159).